Consider the following 1033-residue polypeptide: Calcium-transporting ATPase 3, plasma membrane-type (1033 aa).

At 1–180 the chain is on the cytoplasmic side; that stretch reads MHSGVNGCCP…FVWEALEDTT (180 aa). 2 helical membrane-spanning segments follow: residues 181–201 and 204–224; these read LIIL…TEGW and GAHD…VTGT. The Cytoplasmic segment spans residues 225–268; it reads SNYQQSLQFRDLDKEKRKILVQVTRNGLRQRVLIDDLLPGDAVH. The next 2 helical transmembrane spans lie at 269 to 289 and 362 to 382; these read LAVG…SVLV and IGKI…QGII. At 383–405 the chain is on the cytoplasmic side; it reads GQKYLDGLLLSWSGDDVLEILDH. A helical membrane pass occupies residues 406 to 426; that stretch reads FAVAVTIVVVAVPEGLPLAVT. Aspartate 461 (4-aspartylphosphate intermediate) is an active-site residue. Residues aspartate 762 and aspartate 766 each coordinate Mg(2+). Residues 823-843 form a helical membrane-spanning segment; it reads FQLTVNVVALLVNFTSACFTG. Residues 844–846 lie on the Cytoplasmic side of the membrane; sequence DAP. 2 helical membrane-spanning segments follow: residues 847 to 867 and 928 to 948; these read LTAV…ALAL and IVLN…NEIS. Topologically, residues 949–965 are cytoplasmic; the sequence is SREMEDINVLRGMAGNS. Helical transmembrane passes span 966 to 986 and 999 to 1019; these read IFLG…QFLG and WLIS…IKLI. Over 1020–1033 the chain is Cytoplasmic; sequence AVEPHEKADTRRTP.

The protein belongs to the cation transport ATPase (P-type) (TC 3.A.3) family. Type IIB subfamily.

It localises to the membrane. The enzyme catalyses Ca(2+)(in) + ATP + H2O = Ca(2+)(out) + ADP + phosphate + H(+). Its activity is regulated as follows. Activated by calmodulin. Its function is as follows. This magnesium-dependent enzyme catalyzes the hydrolysis of ATP coupled with the translocation of calcium from the cytosol out of the cell, into the endoplasmic reticulum, or into organelles. This chain is Calcium-transporting ATPase 3, plasma membrane-type, found in Oryza sativa subsp. japonica (Rice).